A 1357-amino-acid polypeptide reads, in one-letter code: DNA-directed RNA polymerase subunit beta (1357 aa).

The protein belongs to the RNA polymerase beta chain family. The RNAP catalytic core consists of 2 alpha, 1 beta, 1 beta' and 1 omega subunit. When a sigma factor is associated with the core the holoenzyme is formed, which can initiate transcription.

It catalyses the reaction RNA(n) + a ribonucleoside 5'-triphosphate = RNA(n+1) + diphosphate. Its function is as follows. DNA-dependent RNA polymerase catalyzes the transcription of DNA into RNA using the four ribonucleoside triphosphates as substrates. In Pseudomonas syringae pv. tomato (strain ATCC BAA-871 / DC3000), this protein is DNA-directed RNA polymerase subunit beta.